The primary structure comprises 437 residues: UDP-N-acetylmuramate--L-alanine ligase (437 aa).

108–114 (GAHGKTS) contacts ATP.

It belongs to the MurCDEF family.

The protein localises to the cytoplasm. The catalysed reaction is UDP-N-acetyl-alpha-D-muramate + L-alanine + ATP = UDP-N-acetyl-alpha-D-muramoyl-L-alanine + ADP + phosphate + H(+). It functions in the pathway cell wall biogenesis; peptidoglycan biosynthesis. Cell wall formation. The protein is UDP-N-acetylmuramate--L-alanine ligase of Staphylococcus epidermidis (strain ATCC 12228 / FDA PCI 1200).